Here is an 85-residue protein sequence, read N- to C-terminus: 4-hydroxyphenylacetate decarboxylase small subunit (85 aa).

[4Fe-4S] cluster-binding residues include His4, Cys7, Cys20, Cys34, Cys43, Cys46, Cys60, and Cys78.

It belongs to the HPA decarboxylase small subunit family. In terms of assembly, heterooctamer consisting of 4 large (HpdB) subunits and 4 small (HpdC) subunits, arranged as a tetramer of heterodimers. [4Fe-4S] cluster is required as a cofactor.

The catalysed reaction is 4-hydroxyphenylacetate + H(+) = 4-methylphenol + CO2. The enzyme catalyses 3,4-dihydroxyphenylacetate + H(+) = 4-methylcatechol + CO2. Functionally, component of the HPA decarboxylase that decarboxylates phenylacetates with a hydroxyl group in the p-position. Active toward 4-hydroxyphenylacetate and 3,4-dihydroxyphenylacetate, forming 4-methylphenol and 4-methylcatechol, respectively. Is likely involved in the catabolism of aromatic amino acids such as tyrosine fermentation. 4-methylphenol (p-cresol) formation provides metabolic toxicity, which allows an active suppression of other microbes and may provide growth advantages for the producers in highly competitive environments. The small subunit is essential for enzymatic activity of HPA decarboxylase, and also seems to be involved in the regulation of the enzyme oligomeric state and catalytic activity. This chain is 4-hydroxyphenylacetate decarboxylase small subunit, found in Clostridioides difficile (strain CD196) (Peptoclostridium difficile).